Reading from the N-terminus, the 226-residue chain is Cytidylate kinase (226 aa).

An ATP-binding site is contributed by 11–19 (GPASAGKST).

The protein belongs to the cytidylate kinase family. Type 1 subfamily.

It localises to the cytoplasm. It carries out the reaction CMP + ATP = CDP + ADP. The enzyme catalyses dCMP + ATP = dCDP + ADP. This chain is Cytidylate kinase, found in Limosilactobacillus fermentum (strain NBRC 3956 / LMG 18251) (Lactobacillus fermentum).